Consider the following 331-residue polypeptide: D-alanine--D-alanine ligase (331 aa).

The ATP-grasp domain maps to 122 to 328; sequence KLWYDAIGIP…FHEFLADCIE (207 aa). 152–207 serves as a coordination point for ATP; the sequence is AFDKWGKLFVKAARQGSSVGCYSVTKIEQLSDAIDKAFGFSHQVLVEKAVKPRELE. Positions 282, 295, and 297 each coordinate Mg(2+).

The protein belongs to the D-alanine--D-alanine ligase family. Mg(2+) is required as a cofactor. Mn(2+) serves as cofactor.

It is found in the cytoplasm. The catalysed reaction is 2 D-alanine + ATP = D-alanyl-D-alanine + ADP + phosphate + H(+). Its pathway is cell wall biogenesis; peptidoglycan biosynthesis. In terms of biological role, cell wall formation. The sequence is that of D-alanine--D-alanine ligase from Vibrio vulnificus (strain CMCP6).